The primary structure comprises 217 residues: Polyadenylate-binding protein 3 (217 aa).

A disordered region spans residues 1-28 (MEEEEHEVYGGEIPEVGDTDVPDPDIDM). A compositionally biased stretch (acidic residues) spans 15 to 28 (EVGDTDVPDPDIDM). Residues 30–71 (AADEDAVTELAEMKRRLKEMEEEAAALREMQAKVEKEMGATQ) are a coiled coil. The segment at 75–216 (SMAANQEGKE…FRRPMRYMPY (142 aa)) is necessary for homooligomerization. Residues 89–165 (RSVYVGNVDY…RQLKVSPKRT (77 aa)) enclose the RRM domain. The short motif at 162 to 169 (PKRTNVPG) is the Nuclear localization signal element.

In terms of assembly, monomer and homooligomer. Binds RNA as a monomer and oligomerizes when bound to poly(A). Forms a complex with cleavage and polyadenylation specificity factor (CPSF) subunits PAPS4, PABN1, PABN2, CSTF50 and FIPS5. Interacts with CSP3.

Its subcellular location is the nucleus speckle. The protein localises to the cytoplasm. In terms of biological role, involved in the 3'-end formation of mRNA precursors (pre-mRNA) by the addition of a poly(A) tail of 200-250 nt to the upstream cleavage product. Stimulates poly(A) polymerase (PAPOLA) conferring processivity on the poly(A) tail elongation reaction and also controls the poly(A) tail length. Increases the affinity of poly(A) polymerase for RNA. Binds to poly(A) and to poly(G) with high affinity. May protect the poly(A) tail from degradation. The polypeptide is Polyadenylate-binding protein 3 (Arabidopsis thaliana (Mouse-ear cress)).